The following is a 634-amino-acid chain: Extracellular metalloproteinase MEP (634 aa).

The signal sequence occupies residues 1–18; that stretch reads MRGLLLAGALALPASVFA. The propeptide occupies 19-245; the sequence is HPAHQSYGLN…IHGVVDYVAE (227 aa). Residue His-429 participates in Zn(2+) binding. Glu-430 is a catalytic residue. His-433 lines the Zn(2+) pocket.

The protein belongs to the peptidase M36 family. Zn(2+) is required as a cofactor.

The protein resides in the secreted. Its function is as follows. Secreted metalloproteinase that allows assimilation of proteinaceous substrates and probably acts as a virulence factor. The polypeptide is Extracellular metalloproteinase MEP (MEP) (Neosartorya fischeri (strain ATCC 1020 / DSM 3700 / CBS 544.65 / FGSC A1164 / JCM 1740 / NRRL 181 / WB 181) (Aspergillus fischerianus)).